A 245-amino-acid chain; its full sequence is Biosynthetic peptidoglycan transglycosylase (245 aa).

A helical membrane pass occupies residues 20-42; the sequence is VYAGSVFAGAWLATQLFYLAQIA.

The protein belongs to the glycosyltransferase 51 family.

It localises to the cell inner membrane. It catalyses the reaction [GlcNAc-(1-&gt;4)-Mur2Ac(oyl-L-Ala-gamma-D-Glu-L-Lys-D-Ala-D-Ala)](n)-di-trans,octa-cis-undecaprenyl diphosphate + beta-D-GlcNAc-(1-&gt;4)-Mur2Ac(oyl-L-Ala-gamma-D-Glu-L-Lys-D-Ala-D-Ala)-di-trans,octa-cis-undecaprenyl diphosphate = [GlcNAc-(1-&gt;4)-Mur2Ac(oyl-L-Ala-gamma-D-Glu-L-Lys-D-Ala-D-Ala)](n+1)-di-trans,octa-cis-undecaprenyl diphosphate + di-trans,octa-cis-undecaprenyl diphosphate + H(+). It participates in cell wall biogenesis; peptidoglycan biosynthesis. Functionally, peptidoglycan polymerase that catalyzes glycan chain elongation from lipid-linked precursors. The polypeptide is Biosynthetic peptidoglycan transglycosylase (Burkholderia lata (strain ATCC 17760 / DSM 23089 / LMG 22485 / NCIMB 9086 / R18194 / 383)).